A 301-amino-acid chain; its full sequence is Small ribosomal subunit biogenesis GTPase RsgA (301 aa).

Residues 65–224 (YNQLIRPKVA…LVDTPGFGNL (160 aa)) form the CP-type G domain. Residues 115 to 118 (SKYD) and 167 to 175 (GNSGVGKST) each bind GTP. The Zn(2+) site is built by Cys247, Cys252, His254, and Cys260.

The protein belongs to the TRAFAC class YlqF/YawG GTPase family. RsgA subfamily. As to quaternary structure, monomer. Associates with 30S ribosomal subunit, binds 16S rRNA. It depends on Zn(2+) as a cofactor.

It is found in the cytoplasm. Functionally, one of several proteins that assist in the late maturation steps of the functional core of the 30S ribosomal subunit. Helps release RbfA from mature subunits. May play a role in the assembly of ribosomal proteins into the subunit. Circularly permuted GTPase that catalyzes slow GTP hydrolysis, GTPase activity is stimulated by the 30S ribosomal subunit. This chain is Small ribosomal subunit biogenesis GTPase RsgA, found in Ureaplasma urealyticum serovar 10 (strain ATCC 33699 / Western).